The chain runs to 160 residues: MGVFNYESETTSVIPAARLFKAFILEGDTLIPKVAPQAISSVENIEGNGGPGTIKKITFPEGSPFKYVKERVDEVDHANFKYSYSMIEGGALGDTLEKICNEIKIVATPDGGSILKISNKYHTKGDQEMKAEHMKAIKEKGEALLRAVESYLLAHSDAYN.

Residues lysine 55, tyrosine 82, tyrosine 84, and asparagine 101 each contribute to the brassinolide site.

Belongs to the BetVI family.

It is found in the cytoplasm. Functionally, may be a general steroid carrier protein. The polypeptide is Major pollen allergen Bet v 1-C (BETV1C) (Betula pendula (European white birch)).